The chain runs to 301 residues: Probable alpha-L-glutamate ligase (301 aa).

The region spanning Leu104 to Glu287 is the ATP-grasp domain. ATP-binding positions include Lys141, Glu178 to Phe179, Asp187, and Arg211 to Asn213. 3 residues coordinate Mg(2+): Asp248, Glu260, and Asn262. Asp248, Glu260, and Asn262 together coordinate Mn(2+).

Belongs to the RimK family. Mg(2+) serves as cofactor. Requires Mn(2+) as cofactor.

This chain is Probable alpha-L-glutamate ligase, found in Thioalkalivibrio sulfidiphilus (strain HL-EbGR7).